Reading from the N-terminus, the 185-residue chain is uncharacterized protein (185 aa).

5 helical membrane passes run 4–24, 35–55, 60–80, 123–143, and 152–172; these read IAWMIVFCEIAFWVVIVLGLA, GLLFLALTPVIDLILLAATGV, GASATAAHGIAAVYIGISIAY, VLAYLIGAGLLAGMIYFINDS, and ILKLWTVIIGIDFLITASYFI.

It is found in the cell membrane. This is an uncharacterized protein from Bacillus subtilis (strain 168).